Consider the following 41-residue polypeptide: uncharacterized protein (41 aa).

This is an uncharacterized protein from Saccharomyces cerevisiae (strain ATCC 204508 / S288c) (Baker's yeast).